Here is a 350-residue protein sequence, read N- to C-terminus: Glycosyltransferase 8 domain-containing protein 2 (350 aa).

Residues 1 to 6 are Cytoplasmic-facing; it reads MALLRK. The chain crosses the membrane as a helical; Signal-anchor for type II membrane protein span at residues 7–24; that stretch reads INQVLLFLLIVTLCGILY. Topologically, residues 25–349 are lumenal; the sequence is KKVHKGTMLR…AGIFKLHHPN (325 aa). An N-linked (GlcNAc...) asparagine glycan is attached at Asn234.

It belongs to the glycosyltransferase 8 family.

The protein resides in the membrane. This Bos taurus (Bovine) protein is Glycosyltransferase 8 domain-containing protein 2 (GLT8D2).